The chain runs to 308 residues: N-acetylgalactosamine kinase AgaK (308 aa).

ATP-binding positions include Gly4 to Lys11 and Gly132 to Ile139. 4 residues coordinate Zn(2+): His156, Cys174, Cys176, and Cys181.

Belongs to the ROK (NagC/XylR) family.

The protein resides in the cytoplasm. The catalysed reaction is N-acetyl-D-galactosamine + ATP = N-acetyl-D-galactosamine 6-phosphate + ADP + H(+). It carries out the reaction N-acetyl-D-glucosamine + ATP = N-acetyl-D-glucosamine 6-phosphate + ADP + H(+). In terms of biological role, involved in the pathway of N-acetyl-D-galactosamine degradation. Catalyzes the phosphorylation of N-acetyl-D-galactosamine (GalNAc) to yield D-galactosamine 6-phosphate (GalN-6-P). It can also phosphorylate N-acetylglucosamine (GlcNAc). This Shewanella sp. (strain ANA-3) protein is N-acetylgalactosamine kinase AgaK.